Reading from the N-terminus, the 775-residue chain is Dipeptidyl peptidase 4 (775 aa).

The signal sequence occupies residues 1–15 (MKLLSLLMLAGIAQA). Residues asparagine 81, asparagine 111, asparagine 170, and asparagine 219 are each glycosylated (N-linked (GlcNAc...) asparagine). Active-site charge relay system residues include serine 613, aspartate 690, and histidine 725.

The protein belongs to the peptidase S9B family.

Its subcellular location is the secreted. It catalyses the reaction Release of an N-terminal dipeptide, Xaa-Yaa-|-Zaa-, from a polypeptide, preferentially when Yaa is Pro, provided Zaa is neither Pro nor hydroxyproline.. Its function is as follows. Extracellular dipeptidyl-peptidase which removes N-terminal dipeptides sequentially from polypeptides having unsubstituted N-termini provided that the penultimate residue is proline. Contributes to pathogenicity. The protein is Dipeptidyl peptidase 4 (DPP4) of Trichophyton tonsurans (Scalp ringworm fungus).